Here is a 477-residue protein sequence, read N- to C-terminus: Salivary plasminogen activator alpha 2 (477 aa).

Positions 1 to 36 (MVNTMKTKLLCVLLLCGAVFSLPRQETYRQLARGSR) are cleaved as a signal peptide. Positions 40–82 (VACRDEKTQMIYQQQESWLRPEVRSKRVEHCRCDRGLAQCHTV) constitute a Fibronectin type-I domain. Disulfide bonds link Cys42–Cys72, Cys70–Cys79, Cys87–Cys98, Cys92–Cys109, Cys111–Cys120, Cys128–Cys209, Cys149–Cys191, Cys180–Cys204, Cys214–Cys345, Cys257–Cys273, Cys265–Cys334, Cys359–Cys434, Cys391–Cys407, and Cys424–Cys452. Residues 83-121 (PVKSCSELRCFNGGTCWQAASFSDFVCQCPKGYTGKQCE) enclose the EGF-like domain. One can recognise a Kringle domain in the interval 128–209 (CYKDQGVTYR…ILEFCSVPVC (82 aa)). Asn185 carries N-linked (GlcNAc...) asparagine glycosylation. Residues 226-476 (STGGLFTDIT…YLGWIRDNMR (251 aa)) form the Peptidase S1 domain. Active-site charge relay system residues include His272 and Asp321. Residue Asn398 is glycosylated (N-linked (GlcNAc...) asparagine). Ser428 acts as the Charge relay system in catalysis.

This sequence belongs to the peptidase S1 family. As to quaternary structure, monomer.

The protein localises to the secreted. It catalyses the reaction Specific cleavage of Arg-|-Val bond in plasminogen to form plasmin.. With respect to regulation, activity toward plasminogen is stimulated in the presence of fibrin I. Functionally, probably essential to support the feeding habits of this exclusively haematophagous animal. Probable potent thrombolytic agent. This is Salivary plasminogen activator alpha 2 from Desmodus rotundus (Vampire bat).